The primary structure comprises 937 residues: Isoleucine--tRNA ligase (937 aa).

Positions 58–68 (PYANGHIHLGT) match the 'HIGH' region motif. Position 566 (Glu566) interacts with L-isoleucyl-5'-AMP. Positions 607 to 611 (KMSKS) match the 'KMSKS' region motif. Residue Lys610 coordinates ATP. Positions 906, 909, 925, and 928 each coordinate Zn(2+).

Belongs to the class-I aminoacyl-tRNA synthetase family. IleS type 1 subfamily. Monomer. Zn(2+) serves as cofactor.

Its subcellular location is the cytoplasm. It carries out the reaction tRNA(Ile) + L-isoleucine + ATP = L-isoleucyl-tRNA(Ile) + AMP + diphosphate. In terms of biological role, catalyzes the attachment of isoleucine to tRNA(Ile). As IleRS can inadvertently accommodate and process structurally similar amino acids such as valine, to avoid such errors it has two additional distinct tRNA(Ile)-dependent editing activities. One activity is designated as 'pretransfer' editing and involves the hydrolysis of activated Val-AMP. The other activity is designated 'posttransfer' editing and involves deacylation of mischarged Val-tRNA(Ile). The protein is Isoleucine--tRNA ligase of Lawsonia intracellularis (strain PHE/MN1-00).